The sequence spans 420 residues: Argininosuccinate synthase (420 aa).

ATP is bound by residues 9 to 17 and A35; that span reads AYSGGLDTS. Positions 86 and 91 each coordinate L-citrulline. An ATP-binding site is contributed by 114 to 122; the sequence is SHGCTGKGN. 3 residues coordinate L-aspartate: T118, N122, and D123. An L-citrulline-binding site is contributed by N122. R126, S179, S188, E273, and Y285 together coordinate L-citrulline.

The protein belongs to the argininosuccinate synthase family. Type 1 subfamily. As to quaternary structure, homotetramer.

The protein resides in the cytoplasm. It catalyses the reaction L-citrulline + L-aspartate + ATP = 2-(N(omega)-L-arginino)succinate + AMP + diphosphate + H(+). It participates in amino-acid biosynthesis; L-arginine biosynthesis; L-arginine from L-ornithine and carbamoyl phosphate: step 2/3. Functionally, catalyzes the eighth step in arginine biosynthesis. Also has a catabolic function as the first enzyme of citrulline utilization as nitrogen source via arginine and the reactions involved in the arginase pathway. The sequence is that of Argininosuccinate synthase (ARG1) from Saccharomyces cerevisiae (strain ATCC 204508 / S288c) (Baker's yeast).